The primary structure comprises 250 residues: Probable transcriptional regulatory protein Ctha_1786 (250 aa).

The protein belongs to the TACO1 family.

It is found in the cytoplasm. The sequence is that of Probable transcriptional regulatory protein Ctha_1786 from Chloroherpeton thalassium (strain ATCC 35110 / GB-78).